Here is a 310-residue protein sequence, read N- to C-terminus: HPr kinase/phosphorylase 1 (310 aa).

Residues His139 and Lys160 contribute to the active site. 154-161 (GQSGVGKS) provides a ligand contact to ATP. Ser161 serves as a coordination point for Mg(2+). Catalysis depends on Asp178, which acts as the Proton acceptor; for phosphorylation activity. Proton donor; for dephosphorylation activity. An important for the catalytic mechanism of both phosphorylation and dephosphorylation region spans residues 202–211 (LEIRGLGIIN). A Mg(2+)-binding site is contributed by Glu203. Arg244 is a catalytic residue. The tract at residues 265–270 (PVRPGR) is important for the catalytic mechanism of dephosphorylation.

This sequence belongs to the HPrK/P family. As to quaternary structure, homohexamer. It depends on Mg(2+) as a cofactor.

It carries out the reaction [HPr protein]-L-serine + ATP = [HPr protein]-O-phospho-L-serine + ADP + H(+). The enzyme catalyses [HPr protein]-O-phospho-L-serine + phosphate + H(+) = [HPr protein]-L-serine + diphosphate. Its function is as follows. Catalyzes the ATP- as well as the pyrophosphate-dependent phosphorylation of a specific serine residue in HPr, a phosphocarrier protein of the phosphoenolpyruvate-dependent sugar phosphotransferase system (PTS). HprK/P also catalyzes the pyrophosphate-producing, inorganic phosphate-dependent dephosphorylation (phosphorolysis) of seryl-phosphorylated HPr (P-Ser-HPr). The two antagonistic activities of HprK/P are regulated by several intracellular metabolites, which change their concentration in response to the absence or presence of rapidly metabolisable carbon sources (glucose, fructose, etc.) in the growth medium. Also phosphorylates/dephosphorylates the HPr-like catabolite repression protein crh on a specific serine residue. Therefore, by controlling the phosphorylation state of HPr and crh, HPrK/P is a sensor enzyme that plays a major role in the regulation of carbon metabolism and sugar transport: it mediates carbon catabolite repression (CCR), and regulates PTS-catalyzed carbohydrate uptake and inducer exclusion. This is HPr kinase/phosphorylase 1 (hprK1) from Oceanobacillus iheyensis (strain DSM 14371 / CIP 107618 / JCM 11309 / KCTC 3954 / HTE831).